The following is a 308-amino-acid chain: Ribosomal protein L11 methyltransferase (308 aa).

Thr157, Gly178, Asp200, and Asn243 together coordinate S-adenosyl-L-methionine.

Belongs to the methyltransferase superfamily. PrmA family.

The protein resides in the cytoplasm. It catalyses the reaction L-lysyl-[protein] + 3 S-adenosyl-L-methionine = N(6),N(6),N(6)-trimethyl-L-lysyl-[protein] + 3 S-adenosyl-L-homocysteine + 3 H(+). Functionally, methylates ribosomal protein L11. In Pelotomaculum thermopropionicum (strain DSM 13744 / JCM 10971 / SI), this protein is Ribosomal protein L11 methyltransferase.